The chain runs to 62 residues: Small ribosomal subunit protein bS21 (62 aa).

It belongs to the bacterial ribosomal protein bS21 family.

This is Small ribosomal subunit protein bS21 (rpsU) from Mycoplasma genitalium (strain ATCC 33530 / DSM 19775 / NCTC 10195 / G37) (Mycoplasmoides genitalium).